The chain runs to 270 residues: Urease accessory protein UreD (270 aa).

The protein belongs to the UreD family. UreD, UreF and UreG form a complex that acts as a GTP-hydrolysis-dependent molecular chaperone, activating the urease apoprotein by helping to assemble the nickel containing metallocenter of UreC. The UreE protein probably delivers the nickel.

Its subcellular location is the cytoplasm. Its function is as follows. Required for maturation of urease via the functional incorporation of the urease nickel metallocenter. This Actinobacillus pleuropneumoniae serotype 7 (strain AP76) protein is Urease accessory protein UreD.